A 338-amino-acid chain; its full sequence is tRNA dimethylallyltransferase (338 aa).

Position 13–20 (13–20 (GPTASGKT)) interacts with ATP. 15–20 (TASGKT) serves as a coordination point for substrate. Interaction with substrate tRNA regions lie at residues 38–41 (DSTL) and 162–166 (QRVSR).

This sequence belongs to the IPP transferase family. As to quaternary structure, monomer. Requires Mg(2+) as cofactor.

The enzyme catalyses adenosine(37) in tRNA + dimethylallyl diphosphate = N(6)-dimethylallyladenosine(37) in tRNA + diphosphate. In terms of biological role, catalyzes the transfer of a dimethylallyl group onto the adenine at position 37 in tRNAs that read codons beginning with uridine, leading to the formation of N6-(dimethylallyl)adenosine (i(6)A). The polypeptide is tRNA dimethylallyltransferase (Cellvibrio japonicus (strain Ueda107) (Pseudomonas fluorescens subsp. cellulosa)).